The chain runs to 353 residues: Photosystem II protein D1 (353 aa).

Thr2 is subject to N-acetylthreonine. Thr2 is subject to Phosphothreonine. 3 helical membrane passes run 29-46 (YIGW…TATS), 118-133 (HFLL…EWEL), and 142-156 (WIAV…AATA). His118 serves as a coordination point for chlorophyll a. Tyr126 lines the pheophytin a pocket. The [CaMn4O5] cluster site is built by Asp170 and Glu189. Residues 197 to 218 (FHMLGVAGVFGGSLFSAMHGSL) traverse the membrane as a helical segment. Residue His198 participates in chlorophyll a binding. A quinone contacts are provided by residues His215 and 264–265 (SF). His215 is a Fe cation binding site. Fe cation is bound at residue His272. A helical transmembrane segment spans residues 274 to 288 (FLAAWPVVGIWFTAL). [CaMn4O5] cluster contacts are provided by His332, Glu333, Asp342, and Ala344. Positions 345 to 353 (AVEVPSTNG) are excised as a propeptide.

Belongs to the reaction center PufL/M/PsbA/D family. PSII is composed of 1 copy each of membrane proteins PsbA, PsbB, PsbC, PsbD, PsbE, PsbF, PsbH, PsbI, PsbJ, PsbK, PsbL, PsbM, PsbT, PsbX, PsbY, PsbZ, Psb30/Ycf12, at least 3 peripheral proteins of the oxygen-evolving complex and a large number of cofactors. It forms dimeric complexes. The D1/D2 heterodimer binds P680, chlorophylls that are the primary electron donor of PSII, and subsequent electron acceptors. It shares a non-heme iron and each subunit binds pheophytin, quinone, additional chlorophylls, carotenoids and lipids. D1 provides most of the ligands for the Mn4-Ca-O5 cluster of the oxygen-evolving complex (OEC). There is also a Cl(-1) ion associated with D1 and D2, which is required for oxygen evolution. The PSII complex binds additional chlorophylls, carotenoids and specific lipids. is required as a cofactor. In terms of processing, tyr-161 forms a radical intermediate that is referred to as redox-active TyrZ, YZ or Y-Z. C-terminally processed by CTPA; processing is essential to allow assembly of the oxygen-evolving complex and thus photosynthetic growth.

It is found in the plastid. It localises to the chloroplast thylakoid membrane. The enzyme catalyses 2 a plastoquinone + 4 hnu + 2 H2O = 2 a plastoquinol + O2. Photosystem II (PSII) is a light-driven water:plastoquinone oxidoreductase that uses light energy to abstract electrons from H(2)O, generating O(2) and a proton gradient subsequently used for ATP formation. It consists of a core antenna complex that captures photons, and an electron transfer chain that converts photonic excitation into a charge separation. The D1/D2 (PsbA/PsbD) reaction center heterodimer binds P680, the primary electron donor of PSII as well as several subsequent electron acceptors. In Eucalyptus globulus subsp. globulus (Tasmanian blue gum), this protein is Photosystem II protein D1.